Reading from the N-terminus, the 252-residue chain is CD99 antigen-like protein 2 (252 aa).

Positions 1–23 (MEKTLWTWTLLAVFSLLVVKGMS) are cleaved as a signal peptide. The tract at residues 30–170 (DALGDDDDDE…DLDPADDNNY (141 aa)) is disordered. A compositionally biased stretch (low complexity) spans 57-68 (AAVKPTLKPVKP). A compositionally biased stretch (basic and acidic residues) spans 96–120 (NDIKGKGKDSGKGDKEVGGGSRDDG). The helical transmembrane segment at 178–198 (TIAGIVSAVAMALVGAVSSYI) threads the bilayer.

It belongs to the CD99 family.

The protein localises to the cell membrane. The protein resides in the cell junction. Functionally, may function as a homophilic adhesion molecule. This is CD99 antigen-like protein 2 (cd99l2) from Danio rerio (Zebrafish).